Here is a 490-residue protein sequence, read N- to C-terminus: Cytochrome P450 2C54 (490 aa).

Serine 127 carries the phosphoserine modification. An N6-acetyllysine mark is found at lysine 252 and lysine 375. Residue cysteine 435 coordinates heme.

It belongs to the cytochrome P450 family. Requires heme as cofactor. As to expression, expressed in liver.

Its subcellular location is the endoplasmic reticulum membrane. It is found in the microsome membrane. It carries out the reaction an organic molecule + reduced [NADPH--hemoprotein reductase] + O2 = an alcohol + oxidized [NADPH--hemoprotein reductase] + H2O + H(+). In terms of biological role, metabolizes arachidonic acid mainly to 12-hydroxyeicosatetraenoic acid (HETE). The protein is Cytochrome P450 2C54 of Mus musculus (Mouse).